A 446-amino-acid chain; its full sequence is MENILDLWNQALAQIEKKLSKPSFETWMKSTKAHSLQGDTLTITAPNEFARDWLESRYLHLIADTIYELTGEELSIKFVIPQNQDVEDFMPKPQVKKAVKEDTSDFPQNMLNPKYTFDTFVIGSGNRFAHAASLAVAEAPAKAYNPLFIYGGVGLGKTHLMHAIGHYVIDHNPSAKVVYLSSEKFTNEFINSIRDNKAVDFRNRYRNVDVLLIDDIQFLAGKEQTQEEFFHTFNTLHEESKQIVISSDRPPKEIPTLEDRLRSRFEWGLITDITPPDLETRIAILRKKAKAEGLDIPNEVMLYIANQIDSNIRELEGALIRVVAYSSLINKDINADLAAEALKDIIPSSKPKVITIKEIQRVVGQQFNIKLEDFKAKKRTKSVAFPRQIAMYLSREMTDSSLPKIGEEFGGRDHTTVIHAHEKISKLLADDEQLQQHVKEIKEQLK.

The interval 1-82 is domain I, interacts with DnaA modulators; the sequence is MENILDLWNQ…ELSIKFVIPQ (82 aa). The tract at residues 83 to 103 is domain II; sequence NQDVEDFMPKPQVKKAVKEDT. The domain III, AAA+ region stretch occupies residues 104 to 332; it reads SDFPQNMLNP…VAYSSLINKD (229 aa). ATP contacts are provided by glycine 154, leucine 155, glycine 156, lysine 157, and threonine 158. A Mg(2+)-binding site is contributed by threonine 158. An Initiator specific motif (ISM) motif is present at residues 182–206; that stretch reads SEKFTNEFINSIRDNKAVDFRNRYR. Residues aspartate 214 and aspartate 215 each coordinate Mg(2+). A linker region spans residues 333 to 346; sequence INADLAAEALKDII. The tract at residues 347–446 is domain IV, binds dsDNA; that stretch reads PSSKPKVITI…HVKEIKEQLK (100 aa).

Belongs to the DnaA family. The DNA replisome assembles sequentially on oriC in this order; DnaA, DnaD, DnaB, DnaI-DnaC helicase. Oligomerizes as a right-handed, spiral filament on DNA at oriC. Forms an ATP-dependent helix on DNA at oriC; both DnaD and YabA inhibit formation of the DnaA helix. Forms an ATP-dependent oligomer, formation is stimulated by ds- and ssDNA; monomeric ADP-Soj inhibits oligomer formation. Interacts with DnaD. Interacts with YabA, and via YabA, with the replication machinery subunit beta sliding clamp DnaN. Interacts with YabA via domain IIIa (residues 109-275). Isolated domain I forms a 1:1 complex with SirA. Interacts with Soj, probably via domain III. Interacts via domains I and III with CcrZ. Interacts via domain IV with skin prophage-like element protein YqaH.

The protein resides in the cytoplasm. It is found in the nucleoid. It carries out the reaction ATP + H2O = ADP + phosphate + H(+). Its activity is regulated as follows. Oligomerization of DnaA can be controlled by Soj; monomeric ADP-Soj inhibits formation of the DnaA helix. YabA prevents the cooperative binding of DnaA-ATP to oriC-containing sequences; increased levels of DnaN (beta sliding clamp subunit of DNA polymerase) removes YabA from association with DnaA on the chromosome, enabling increased association of DnaA with its chromosomal binding sites. Both Soj and YabA chase DnaA from oriC site, YabA tethers DnaA to the DNA replication fork via the beta sliding clamp subunit DnaN. SirA antagonizes the ability of DnaA to bind to the replication origin, and thus decreases replication inititation during sporulation. Small protein YqaH, part of the skin prophage-like element, binds to DnaA and antagonizes its replication initiation and transcriptional regulation activities. Plays an essential role in the initiation and regulation of chromosomal replication. ATP-DnaA binds to the origin of replication (oriC) to initiate formation of the DNA replication initiation complex once per cell cycle. Binds directly to oriC at a 9 bp consensus (DnaA box): 5'-TTATCCACA-3' and separates the double-stranded (ds)DNA. Forms a right-handed helical filament on oriC DNA; dsDNA binds to the exterior of the filament while single-stranded (ss)DNA is stabilized in the filament's interior. The ATP-DnaA-oriC complex binds and stabilizes one strand of the AT-rich DNA unwinding element (DUE or basal unwinding system, BUS), permitting loading of DNA polymerase. Binds ATP with high affinity, ADP with lower affinity, but not AMP, cAMP or cGMP; ATP stimulates binding to DnaA boxes. Once bound promotes sequence-specific strand separation of DnaA-trios (3'-GAT-5' consensus) adjacent to oriC in the presence of ATP but not ADP. Domains III and IV are sufficient to separate dsDNA strands. The 'initiator specific motif' (ISM) of domain III contacts the middle adenine residue of the DnaA-trio probably stretching and stabilizing ssDNA. DnaA-trio recognition is co-operative and depends on DnaA self-assembly. The ssDNA serves as an assembly region for the replication machinery. Tethered to DnaN (beta sliding clamp subunit of DNA polymerase) and thus replication forks by YabA. During replication initiation DnaA-ATP binds cooperatively to sequences in oriC. YabA prevents this cooperative binding while still allowing DnaA to bind DNA. During the cell cycle an initial phase occurs in which DnaA is associated with origin regions, then the origin regions become spatially separate from the centrally sequestered DnaA molecules, and most DnaA molecules are unable to reassociate with origin regions. Does not require YabA to bind DNA. During sporulation SirA prevents DnaA association with the replication origin to prevent excessive chromosome replication. Overexpression induces the SOS response; increasing expression of downstream dnaN blocks this induction. Over-initiation of DNA replication is very deleterious; isolated suppressors in relA, ndrR, dnaC, cshA and crrZ increase replication elongation, decrease replication inititation or lead to a decrease in the replicative DNA helicase. Binds acidic phospholipids. In terms of biological role, the half-life of ADP-DnaA is 1.5 minutes, of ATP-DnaA is 5 minutes at 37 degrees Celsius; in E.coli the half-life of ADP-DnaA is about 45 minutes. Functionally, also acts as a transcriptional regulator. DnaA inhibits its own gene expression. DnaA binds specifically to the promoter regions of at least 20 operons (56 genes), including itself, sda and dnaB, and probably controls their expression in response to DNA replication inhibition. The protein is Chromosomal replication initiator protein DnaA of Bacillus subtilis (strain 168).